Here is a 538-residue protein sequence, read N- to C-terminus: Chaperonin GroEL (538 aa).

ATP-binding positions include 29-32, 86-90, Gly413, 476-478, and Asp492; these read TIGP, DGTTT, and NAA.

It belongs to the chaperonin (HSP60) family. Forms a cylinder of 14 subunits composed of two heptameric rings stacked back-to-back. Interacts with the co-chaperonin GroES.

It localises to the cytoplasm. It carries out the reaction ATP + H2O + a folded polypeptide = ADP + phosphate + an unfolded polypeptide.. Together with its co-chaperonin GroES, plays an essential role in assisting protein folding. The GroEL-GroES system forms a nano-cage that allows encapsulation of the non-native substrate proteins and provides a physical environment optimized to promote and accelerate protein folding. The sequence is that of Chaperonin GroEL from Staphylococcus aureus (strain bovine RF122 / ET3-1).